The following is a 186-amino-acid chain: Ribosome-recycling factor (186 aa).

This sequence belongs to the RRF family.

It is found in the cytoplasm. In terms of biological role, responsible for the release of ribosomes from messenger RNA at the termination of protein biosynthesis. May increase the efficiency of translation by recycling ribosomes from one round of translation to another. This chain is Ribosome-recycling factor, found in Ralstonia pickettii (strain 12J).